We begin with the raw amino-acid sequence, 222 residues long: uncharacterized protein (222 aa).

This is an uncharacterized protein from Fowlpox virus (strain NVSL) (FPV).